Reading from the N-terminus, the 521-residue chain is Caspase-10 (521 aa).

The propeptide occupies 1 to 219; it reads MKSQGQHWYS…GEEELVSQTD (219 aa). 2 DED domains span residues 19-97 and 114-187; these read SFRE…HLNC and LFRN…NIEK. 2 stretches are compositionally biased toward polar residues: residues 231 to 248 and 259 to 268; these read SWQN…TNGA and ASANTLNSET. Residues 231-269 form a disordered region; the sequence is SWQNKHAGSNGNRATNGAPSLVSRGMQGASANTLNSETS. Residues His-358 and Cys-401 contribute to the active site.

Belongs to the peptidase C14A family. In terms of assembly, heterotetramer that consists of two anti-parallel arranged heterodimers, each one formed by a 23/17 kDa (p23/17) (depending on the splicing events) and a 12 kDa (p12) subunit. Self-associates. Interacts with FADD and CASP8. Found in a Fas signaling complex consisting of FAS, FADD, CASP8 and CASP10. Interacts with RFFL and RNF34; negatively regulate CASP10 through proteasomal degradation. Interacts with RIOK3. Cleavage by granzyme B and autocatalytic activity generate the two active subunits. Detectable in most tissues. Lowest expression is seen in brain, kidney, prostate, testis and colon.

The enzyme catalyses Strict requirement for Asp at position P1 and has a preferred cleavage sequence of Leu-Gln-Thr-Asp-|-Gly.. In terms of biological role, involved in the activation cascade of caspases responsible for apoptosis execution. Recruited to both Fas- and TNFR-1 receptors in a FADD dependent manner. May participate in the granzyme B apoptotic pathways. Cleaves and activates effector caspases CASP3, CASP4, CASP6, CASP7, CASP8 and CASP9. Hydrolyzes the small- molecule substrates, Tyr-Val-Ala-Asp-|-AMC and Asp-Glu-Val-Asp-|-AMC. Functionally, isoform 7 can enhance NF-kappaB activity but promotes only slight apoptosis. Its function is as follows. Isoform C is proteolytically inactive. This is Caspase-10 (CASP10) from Homo sapiens (Human).